A 96-amino-acid polypeptide reads, in one-letter code: Protein TraA (96 aa).

The polypeptide is Protein TraA (traA) (Escherichia coli).